The sequence spans 131 residues: UPF0102 protein RPD_0400 (131 aa).

Belongs to the UPF0102 family.

The chain is UPF0102 protein RPD_0400 from Rhodopseudomonas palustris (strain BisB5).